A 196-amino-acid chain; its full sequence is UPF0340 protein TTHA0583 (196 aa).

The protein belongs to the UPF0340 family.

The polypeptide is UPF0340 protein TTHA0583 (Thermus thermophilus (strain ATCC 27634 / DSM 579 / HB8)).